The following is a 189-amino-acid chain: Threonylcarbamoyl-AMP synthase (189 aa).

The 183-residue stretch at N7–K189 folds into the YrdC-like domain.

The protein belongs to the SUA5 family. TsaC subfamily.

It is found in the cytoplasm. It catalyses the reaction L-threonine + hydrogencarbonate + ATP = L-threonylcarbamoyladenylate + diphosphate + H2O. Functionally, required for the formation of a threonylcarbamoyl group on adenosine at position 37 (t(6)A37) in tRNAs that read codons beginning with adenine. Catalyzes the conversion of L-threonine, HCO(3)(-)/CO(2) and ATP to give threonylcarbamoyl-AMP (TC-AMP) as the acyladenylate intermediate, with the release of diphosphate. This is Threonylcarbamoyl-AMP synthase from Blochmanniella floridana.